A 402-amino-acid polypeptide reads, in one-letter code: S-adenosylmethionine synthase (402 aa).

H16 provides a ligand contact to ATP. D18 contacts Mg(2+). A K(+)-binding site is contributed by E44. E57 and Q109 together coordinate L-methionine. Residues 109–119 (QSAHIAQGVDA) are flexible loop. ATP-binding positions include 174–176 (DTK), D252, 258–259 (RK), A275, and K279. D252 contacts L-methionine. K283 provides a ligand contact to L-methionine.

It belongs to the AdoMet synthase family. As to quaternary structure, homotetramer; dimer of dimers. Mg(2+) is required as a cofactor. It depends on K(+) as a cofactor.

Its subcellular location is the cytoplasm. The enzyme catalyses L-methionine + ATP + H2O = S-adenosyl-L-methionine + phosphate + diphosphate. It functions in the pathway amino-acid biosynthesis; S-adenosyl-L-methionine biosynthesis; S-adenosyl-L-methionine from L-methionine: step 1/1. Catalyzes the formation of S-adenosylmethionine (AdoMet) from methionine and ATP. The overall synthetic reaction is composed of two sequential steps, AdoMet formation and the subsequent tripolyphosphate hydrolysis which occurs prior to release of AdoMet from the enzyme. In Rhizorhabdus wittichii (strain DSM 6014 / CCUG 31198 / JCM 15750 / NBRC 105917 / EY 4224 / RW1) (Sphingomonas wittichii), this protein is S-adenosylmethionine synthase.